A 160-amino-acid polypeptide reads, in one-letter code: Cytochrome b6-f complex subunit 4 (160 aa).

3 helical membrane passes run 36-56, 95-115, and 131-151; these read LLYI…GLAV, LLGV…PFLE, and TVFL…ALPI.

The protein belongs to the cytochrome b family. PetD subfamily. In terms of assembly, the 4 large subunits of the cytochrome b6-f complex are cytochrome b6, subunit IV (17 kDa polypeptide, petD), cytochrome f and the Rieske protein, while the 4 small subunits are petG, petL, petM and petN. The complex functions as a dimer.

It localises to the plastid. The protein resides in the chloroplast thylakoid membrane. Functionally, component of the cytochrome b6-f complex, which mediates electron transfer between photosystem II (PSII) and photosystem I (PSI), cyclic electron flow around PSI, and state transitions. The chain is Cytochrome b6-f complex subunit 4 from Chara vulgaris (Common stonewort).